Consider the following 104-residue polypeptide: MIKAKKTYVLKLYVAGNTPNSVRALKTLKNILEQEFEGVYALKVIDVLKSPQLAEEDKILATPTLSKILPPPVRKIIGDLSDRERVLIGLDLLYEELSEGDFEE.

It belongs to the KaiB family. In terms of assembly, the KaiABC complex composition changes during the circadian cycle to control KaiC phosphorylation. Complexes KaiC(6), KaiA(2-4):KaiC(6), KaiB(6):KaiC(6) and KaiC(6):KaiB(6):KaiA(12) are among the most important forms, many form cooperatively. Undergoes a major conformational rearrangment; in the free state forms homotetramers as a dimer of dimers. When bound to the CI domain of KaiC switches to a monomeric thioredoxin-fold (KaiB(fs)). KaiB(fs) binds CikA, leading it to dephosphorylate phospho-RpaA.

Its function is as follows. Key component of the KaiABC oscillator complex, which constitutes the main circadian regulator in cyanobacteria. Complex composition changes during the circadian cycle to control KaiC phosphorylation. KaiA stimulates KaiC autophosphorylation, while KaiB sequesters KaiA, leading to KaiC autodephosphorylation. Phospho-Ser-431 KaiC accumulation triggers binding of KaiB to form the KaiB(6):KaiC(6) complex, leading to changes in output regulators CikA and SasA. KaiB switches to a thioredoxin-like fold (KaiB(fs)) when bound to KaiC. KaiB(6):KaiC(6) formation exposes a site for KaiA binding that sequesters KaiA from KaiC, making the KaiC(6):KaiB(6):KaiA(12) complex that results in KaiC autodephosphorylation. Functionally, a metamorphic protein which reversibly switches between an inactive tetrameric fold and a rare, thioredoxin-like monomeric fold (KaiB(fs)). KaiB(fs) binds phospho-KaiC, KaiA and CikA. KaiA and CikA compete for binding to KaiB(fs), and KaiB(fs) and SasA compete for binding to KaiC, thus the clock oscillator and output signal pathway are tightly coupled. The chain is Circadian clock oscillator protein KaiB from Nostoc punctiforme (strain ATCC 29133 / PCC 73102).